Reading from the N-terminus, the 590-residue chain is Auxin response factor 20 (590 aa).

Residues 126-224 constitute a DNA-binding region (TF-B3); that stretch reads FTKVLTASDT…ELRVGIRRAR (99 aa). Residues 495-576 form the PB1 domain; the sequence is RTCTKVQMQG…MVKKILIYSK (82 aa).

The protein belongs to the ARF family. In terms of assembly, homodimers and heterodimers.

The protein localises to the nucleus. Functionally, auxin response factors (ARFs) are transcriptional factors that bind specifically to the DNA sequence 5'-TGTCTC-3' found in the auxin-responsive promoter elements (AuxREs). Could act as transcriptional activator or repressor. Formation of heterodimers with Aux/IAA proteins may alter their ability to modulate early auxin response genes expression. The chain is Auxin response factor 20 (ARF20) from Arabidopsis thaliana (Mouse-ear cress).